The following is a 687-amino-acid chain: Follicle-stimulating hormone receptor (687 aa).

The N-terminal stretch at Met-1–Gly-17 is a signal peptide. In terms of domain architecture, LRRNT spans Cys-18–Arg-46. At Cys-18–Arg-358 the chain is on the extracellular side. Residues Cys-23 and Cys-32 are joined by a disulfide bond. 9 LRR repeats span residues Leu-49–Leu-72, Lys-73–Leu-97, His-98–Asn-118, Leu-119–Ser-143, Leu-144–Ser-169, Phe-170–Gly-192, Thr-193–Gly-216, Ala-217–Asn-240, and Leu-241–Glu-259. 2 N-linked (GlcNAc...) asparagine glycosylation sites follow: Asn-191 and Asn-199. Disulfide bonds link Cys-275/Cys-338, Cys-276/Cys-292, Cys-276/Cys-348, and Cys-292/Cys-330. An N-linked (GlcNAc...) asparagine glycan is attached at Asn-293. At Tyr-327 the chain carries Sulfotyrosine. A helical membrane pass occupies residues Val-359 to Leu-379. Residues Ile-380–Arg-390 lie on the Cytoplasmic side of the membrane. A helical transmembrane segment spans residues Phe-391–Val-413. Over Asp-414–Asp-435 the chain is Extracellular. An intrachain disulfide couples Cys-434 to Cys-509. A helical transmembrane segment spans residues Ala-436 to Leu-457. Residues Glu-458–His-477 lie on the Cytoplasmic side of the membrane. The helical transmembrane segment at Ala-478–Ile-500 threads the bilayer. Residues Ser-501 to Gln-520 are Extracellular-facing. A helical membrane pass occupies residues Leu-521 to Thr-542. Residues His-543–Arg-565 lie on the Cytoplasmic side of the membrane. The chain crosses the membrane as a helical span at residues Met-566–Leu-589. Residues Lys-590–Lys-600 lie on the Extracellular side of the membrane. The chain crosses the membrane as a helical span at residues Ile-601–Thr-622. Over Lys-623–Asn-687 the chain is Cytoplasmic.

This sequence belongs to the G-protein coupled receptor 1 family. FSH/LSH/TSH subfamily. As to quaternary structure, homotrimer. Functions as a homotrimer binding the FSH hormone heterodimer composed of CGA and FSHB. Interacts with ARRB2. Interacts with APPL2; interaction is independent of follicle stimulating hormone stimulation. In terms of processing, N-glycosylated; indirectly required for FSH-binding, possibly via a conformational change that allows high affinity binding of hormone. Sulfated.

The protein localises to the cell membrane. In terms of biological role, g protein-coupled receptor for follitropin, the follicle-stimulating hormone. Through cAMP production activates the downstream PI3K-AKT and ERK1/ERK2 signaling pathways. The chain is Follicle-stimulating hormone receptor (FSHR) from Equus asinus (Donkey).